Reading from the N-terminus, the 465-residue chain is Cysteine--tRNA ligase (465 aa).

Cysteine 29 is a binding site for Zn(2+). The 'HIGH' region signature appears at 31–41 (PTVYNYIHIGN). 3 residues coordinate Zn(2+): cysteine 209, histidine 234, and glutamate 238. Residues 266-270 (KMSKS) carry the 'KMSKS' region motif. Lysine 269 serves as a coordination point for ATP. At serine 270 the chain carries Phosphoserine.

This sequence belongs to the class-I aminoacyl-tRNA synthetase family. In terms of assembly, monomer. The cofactor is Zn(2+).

It is found in the cytoplasm. It carries out the reaction tRNA(Cys) + L-cysteine + ATP = L-cysteinyl-tRNA(Cys) + AMP + diphosphate. The protein is Cysteine--tRNA ligase of Bacillus thuringiensis (strain Al Hakam).